The following is a 123-amino-acid chain: Ig heavy chain V region HPCG14 (123 aa).

Positions 1–114 constitute an Ig-like domain; sequence EVKLVESGGG…GYDYWFDVWG (114 aa).

The chain is Ig heavy chain V region HPCG14 from Mus musculus (Mouse).